A 354-amino-acid polypeptide reads, in one-letter code: Ferrochelatase (354 aa).

Fe cation is bound by residues H214 and E295.

It belongs to the ferrochelatase family.

The protein resides in the cytoplasm. It carries out the reaction heme b + 2 H(+) = protoporphyrin IX + Fe(2+). Its pathway is porphyrin-containing compound metabolism; protoheme biosynthesis; protoheme from protoporphyrin-IX: step 1/1. Functionally, catalyzes the ferrous insertion into protoporphyrin IX. This Burkholderia orbicola (strain MC0-3) protein is Ferrochelatase.